The sequence spans 360 residues: Melanoma-associated antigen B16 (360 aa).

Residues 1–118 (MSQKNPEYAA…GNSVIPPDQP (118 aa)) form a disordered region. Basic and acidic residues predominate over residues 9–19 (AADHDHTREEM). Polar residues predominate over residues 63-98 (CSSSQLLTASNQEDPAYETPSTSRGLQHPYVSSSES). An MAGE domain is found at 125–324 (IDGKVNFLVN…TVFPSQYEEA (200 aa)). Residues 340–360 (AGPSSASGESSSDMGSNVPHI) are disordered. The segment covering 341–360 (GPSSASGESSSDMGSNVPHI) has biased composition (low complexity).

This chain is Melanoma-associated antigen B16 (Mageb16), found in Rattus norvegicus (Rat).